The sequence spans 686 residues: Delta-like protein 4 (686 aa).

An N-terminal signal peptide occupies residues 1–26; that stretch reads MTPASRSACRWALLLLAVLWPQQRAA. Topologically, residues 27 to 532 are extracellular; it reads GSGIFQLRLQ…GLPPSFPWVA (506 aa). Intrachain disulfides connect cysteine 51-cysteine 55 and cysteine 62-cysteine 75. Residues asparagine 79, asparagine 109, and asparagine 162 are each glycosylated (N-linked (GlcNAc...) asparagine). Residues 174–218 form the DSL domain; it reads VICSDNYYGESCSRLCKKRDDHFGHYECQPDGSLSCLPGWTGKYC. Cysteine 176 and cysteine 185 are disulfide-bonded. Interaction with Notch1 regions lie at residues 186-188 and 192-196; these read SRL and RDDHF. 26 disulfide bridges follow: cysteine 189/cysteine 201, cysteine 209/cysteine 218, cysteine 223/cysteine 234, cysteine 227/cysteine 240, cysteine 242/cysteine 251, cysteine 254/cysteine 265, cysteine 260/cysteine 271, cysteine 273/cysteine 282, cysteine 289/cysteine 301, cysteine 295/cysteine 311, cysteine 313/cysteine 322, cysteine 329/cysteine 340, cysteine 334/cysteine 349, cysteine 351/cysteine 360, cysteine 367/cysteine 378, cysteine 372/cysteine 389, cysteine 391/cysteine 400, cysteine 407/cysteine 418, cysteine 412/cysteine 427, cysteine 429/cysteine 438, cysteine 445/cysteine 456, cysteine 450/cysteine 465, cysteine 467/cysteine 476, cysteine 485/cysteine 496, cysteine 490/cysteine 507, and cysteine 509/cysteine 518. EGF-like domains follow at residues 219–252, 253–283, 285–323, 325–361, 364–401, 403–439, 441–477, and 481–519; these read DQPI…RLCN, ECIP…LFCD, DLNY…EHCE, GLSK…QHCE, TLTC…SNCE, KVDR…THCE, HISD…RRCE, and THDA…SRCE. Residue asparagine 297 is glycosylated (N-linked (GlcNAc...) asparagine). N-linked (GlcNAc...) asparagine glycosylation is present at asparagine 394. The helical transmembrane segment at 533–553 threads the bilayer; the sequence is VSLGVGLVVLLVLLVMVVVAV. Residues 554–686 are Cytoplasmic-facing; the sequence is RQLRLRRPDD…RNECVIATEV (133 aa).

As to quaternary structure, interacts with NOTCH4. Interacts (via N-terminal DSL and MNNL domains) with NOTCH1 (via EGF-like domains). As to expression, expressed in vascular endothelium. Expressed in retina at least during embryogenesis.

It is found in the cell membrane. Involved in the Notch signaling pathway as Notch ligand. Activates NOTCH1 and NOTCH4. Involved in angiogenesis; negatively regulates endothelial cell proliferation and migration and angiogenic sprouting. Essential for retinal progenitor proliferation. Required for suppressing rod fates in late retinal progenitors as well as for proper generation of other retinal cell types. During spinal cord neurogenesis, inhibits V2a interneuron fate. This is Delta-like protein 4 (Dll4) from Mus musculus (Mouse).